The following is a 480-amino-acid chain: Ochratoxinase (480 aa).

Positions 111, 113, 246, 287, and 307 each coordinate Zn(2+). K246 is a catalytic residue. D378 is an active-site residue.

It belongs to the metallo-dependent hydrolases superfamily. Ochratoxinase amidase 2 family. Homooctamer. The cofactor is Zn(2+).

Its subcellular location is the secreted. It carries out the reaction ochratoxin A + H2O = ochratoxin alpha + L-phenylalanine. Its activity is regulated as follows. The Zn(2+)-specific chelator 1,10-phenanthroline inhibits the enzyme activity. In terms of biological role, carboxypeptidase that catalyzes the release of a C-terminal amino acid with specific catalytic activity for aromatic amino acids such as phenylalanine. Is able to degrade ochratoxin A, one of the five major mycotoxins most harmful to humans and animals that is produced by Aspergillus and Penicillium species and occurs in a wide range of agricultural products. This chain is Ochratoxinase, found in Aspergillus niger (strain ATCC MYA-4892 / CBS 513.88 / FGSC A1513).